Reading from the N-terminus, the 1054-residue chain is Desmoglein-1 (1054 aa).

Residues 1–23 (MNWHFLRTATVLLIFLVVVEINS) form the signal peptide. Residues 24–49 (EFRIQVRDYNTKNGTIKWHSIRRQKR) constitute a propeptide that is removed on maturation. N-linked (GlcNAc...) asparagine glycans are attached at residues Asn36, Asn110, and Asn180. Cadherin domains are found at residues 50 to 157 (EWIK…PPVF), 158 to 269 (SMST…IPYM), 270 to 389 (EPSS…RPGS), and 386 to 493 (RPGS…KDSE). Residues 50 to 566 (EWIKFAAACR…NLSDNVHFGP (517 aa)) are Extracellular-facing. The disordered stretch occupies residues 487-554 (GWEKDSEKVT…QSNNNHQELG (68 aa)). The segment covering 496-507 (TSSQNSGSSTGD) has biased composition (low complexity). The segment covering 508–517 (SSGGTGGGGR) has biased composition (gly residues). The segment covering 523–534 (GDTTTNTGGKTS) has biased composition (low complexity). The span at 542-554 (TQTQSNNNHQELG) shows a compositional bias: polar residues. Asn557 carries an N-linked (GlcNAc...) asparagine glycan. The helical transmembrane segment at 567-587 (AGIGLLIMGFLVLGLVPFLLM) threads the bilayer. The Cytoplasmic portion of the chain corresponds to 588–1054 (CCDCGGAPGA…TKYSTVQYTK (467 aa)). 5 Desmoglein repeat repeats span residues 830–856 (TYPS…TVTE), 857–886 (SYTT…ERVV), 887–916 (GPIS…ERVI), 917–944 (APSS…ERVI), and 945–973 (RPAS…ERVV). Residues 1018–1040 (GHVRSSSDHHFSQTLGSASPSTA) form a disordered region. Positions 1029-1040 (SQTLGSASPSTA) are enriched in polar residues.

As to quaternary structure, binds to JUP/plakoglobin. Interacts with PKP2. Interacts with DSC3; there is evidence to suggest that the interaction promotes cell-cell adhesion of keratinocytes.

The protein resides in the cell membrane. The protein localises to the cell junction. It localises to the desmosome. It is found in the cytoplasm. Its subcellular location is the nucleus. Component of intercellular desmosome junctions. Involved in the interaction of plaque proteins and intermediate filaments mediating cell-cell adhesion. The protein is Desmoglein-1 (DSG1) of Canis lupus familiaris (Dog).